The following is a 271-amino-acid chain: Phosphate import ATP-binding protein PstB (271 aa).

The region spanning 13–266 (VRTAPVSEAE…PKHPYTEAYI (254 aa)) is the ABC transporter domain. 57–64 (GPSGCGKS) provides a ligand contact to ATP.

Belongs to the ABC transporter superfamily. Phosphate importer (TC 3.A.1.7) family. In terms of assembly, the complex is composed of two ATP-binding proteins (PstB), two transmembrane proteins (PstC and PstA) and a solute-binding protein (PstS).

It localises to the cell inner membrane. It carries out the reaction phosphate(out) + ATP + H2O = ADP + 2 phosphate(in) + H(+). In terms of biological role, part of the ABC transporter complex PstSACB involved in phosphate import. Responsible for energy coupling to the transport system. The chain is Phosphate import ATP-binding protein PstB from Thermus thermophilus (strain ATCC 27634 / DSM 579 / HB8).